The following is a 122-amino-acid chain: Small ribosomal subunit protein uS13 (122 aa).

The interval 99-122 (RGQRTHTNARTRKGPAKAIAGKKK) is disordered.

This sequence belongs to the universal ribosomal protein uS13 family. In terms of assembly, part of the 30S ribosomal subunit. Forms a loose heterodimer with protein S19. Forms two bridges to the 50S subunit in the 70S ribosome.

Located at the top of the head of the 30S subunit, it contacts several helices of the 16S rRNA. In the 70S ribosome it contacts the 23S rRNA (bridge B1a) and protein L5 of the 50S subunit (bridge B1b), connecting the 2 subunits; these bridges are implicated in subunit movement. Contacts the tRNAs in the A and P-sites. The polypeptide is Small ribosomal subunit protein uS13 (Agrobacterium fabrum (strain C58 / ATCC 33970) (Agrobacterium tumefaciens (strain C58))).